Reading from the N-terminus, the 236-residue chain is B-cell antigen receptor complex-associated protein alpha chain (236 aa).

Positions 1–32 are cleaved as a signal peptide; it reads MPGGPGLLQALCATTFLLFLISAGGLGPGSQA. In terms of domain architecture, Ig-like C2-type spans 33–122; that stretch reads LWVDGGPPSM…EKDLNQKILS (90 aa). Topologically, residues 33 to 151 are extracellular; the sequence is LWVDGGPPSM…LDMGEGTKNN (119 aa). Cysteines 54 and 109 form a disulfide. N-linked (GlcNAc...) asparagine glycans are attached at residues Asn-66 and Asn-76. Residues 152–172 traverse the membrane as a helical segment; that stretch reads IITAEGIILLFCAVVPGTLLL. Residues 173–236 are Cytoplasmic-facing; the sequence is FRKRWQNMKF…GDGDVQLEKP (64 aa). In terms of domain architecture, ITAM spans 185–213; it reads DAQDDYEDENLYEGLNLDDCSMYEDISRG. Residue Tyr-196 is modified to Phosphotyrosine; by SRC-type Tyr-kinases. Phosphotyrosine is present on Tyr-207. Asymmetric dimethylarginine; by PRMT1 is present on Arg-212. Phosphotyrosine; by Tyr-kinases is present on Tyr-218.

Heterodimer of alpha and beta chains; disulfide-linked. Part of the B-cell antigen receptor complex where the alpha/beta chain heterodimer is non-covalently associated with an antigen-specific membrane-bound surface immunoglobulin of two heavy chains and two light chains. Interacts through its phosphorylated ITAM domain with the SH2 domains of SYK which stimulates SYK autophosphorylation and activation. Also interacts, when phosphorylated on Tyr-207, with the SH2 domain of BLNK/SLP65, bringing BLNK into proximity with SYK and allowing SYK to phosphorylate BLNK which is necessary for trafficking of the BCR to late endosomes. Interacts with Src-family tyrosine kinases including FYN and LYN, increasing their activity. In terms of processing, phosphorylated on tyrosine, serine and threonine residues upon B-cell activation. Phosphorylation of tyrosine residues by Src-family kinases, including LYN, is an early and essential feature of the BCR signaling cascade. The phosphorylated tyrosines serve as docking sites for SH2-domain containing kinases, leading to their activation which in turn leads to phosphorylation of downstream targets. Phosphorylation of serine and threonine residues may prevent subsequent tyrosine phosphorylation. Arginine methylation in the ITAM domain may interfere with the binding of SYK. It promotes signals leading to B-cell differentiation.

It is found in the cell membrane. Functionally, required in cooperation with CD79B for initiation of the signal transduction cascade activated by binding of antigen to the B-cell antigen receptor complex (BCR) which leads to internalization of the complex, trafficking to late endosomes and antigen presentation. Also required for BCR surface expression and for efficient differentiation of pro- and pre-B-cells. Stimulates SYK autophosphorylation and activation. Binds to BLNK, bringing BLNK into proximity with SYK and allowing SYK to phosphorylate BLNK. Also interacts with and increases activity of some Src-family tyrosine kinases. Represses BCR signaling during development of immature B-cells. The sequence is that of B-cell antigen receptor complex-associated protein alpha chain (CD79A) from Canis lupus familiaris (Dog).